The sequence spans 152 residues: Urease accessory protein UreE (152 aa).

This sequence belongs to the UreE family.

It localises to the cytoplasm. Involved in urease metallocenter assembly. Binds nickel. Probably functions as a nickel donor during metallocenter assembly. This chain is Urease accessory protein UreE, found in Citrobacter koseri (strain ATCC BAA-895 / CDC 4225-83 / SGSC4696).